The sequence spans 189 residues: Leucine repeat adapter protein 25 (189 aa).

Ser28 is modified (phosphoserine). The disordered stretch occupies residues 54–82; that stretch reads ELSRAARAPDGPRHAAGSANSGSAAGPRR. The span at 68-79 shows a compositional bias: low complexity; it reads AAGSANSGSAAG. One copy of the LRR repeat lies at 86–114; it reads LDSALAALRKEMVGLRQLDMSLLCQLWGL. Residues 136–175 are disordered; that stretch reads SSLHSDSSYPPDAGLSDDEEPPDASLPPDPPPLTVPQTHN. Residues 159–169 show a composition bias toward pro residues; the sequence is ASLPPDPPPLT. Phosphoserine is present on Ser188.

It belongs to the FAM89 family. As to quaternary structure, interacts with SKI. Interacts (via LRR repeat) with CDC42BPA (via AGC-kinase C-terminal domain), CDC42BPB (via AGC-kinase C-terminal domain) and LIMK1 (via LIM zinc-binding domains). Forms a tripartite complex with CDC42BPA, CDC42BPB and LIMK1. In terms of assembly, (Microbial infection) Interacts with mouse mammary tumor virus (MMTV) envelope glycoprotein gp70. Widely expressed. Expressed in the early postnatal brain.

Its subcellular location is the cytoplasm. The protein resides in the cell projection. It localises to the lamellipodium. It is found in the cell surface. In terms of biological role, negatively regulates TGF-beta-induced signaling; in cooperation with SKI prevents the translocation of SMAD2 from the nucleus to the cytoplasm in response to TGF-beta. Acts as an adapter that mediates the specific recognition of LIMK1 by CDC42BPA and CDC42BPB in the lamellipodia. LRAP25-mediated CDC42BPA/CDC42BPB targeting to LIMK1 and the lamellipodium results in LIMK1 activation and the subsequent phosphorylation of CFL1 which is important for lamellipodial F-actin regulation. Its function is as follows. (Microbial infection) May be a receptor for mouse mammary tumor virus (MMTV). In Mus musculus (Mouse), this protein is Leucine repeat adapter protein 25.